The following is a 281-amino-acid chain: Imidazole glycerol phosphate synthase subunit HisF (281 aa).

Catalysis depends on residues Asp-12 and Asp-131. Residues 256–281 (VRQAEPLPQPAREGLGDSARRAMSSG) are disordered.

It belongs to the HisA/HisF family. As to quaternary structure, heterodimer of HisH and HisF.

The protein resides in the cytoplasm. It carries out the reaction 5-[(5-phospho-1-deoxy-D-ribulos-1-ylimino)methylamino]-1-(5-phospho-beta-D-ribosyl)imidazole-4-carboxamide + L-glutamine = D-erythro-1-(imidazol-4-yl)glycerol 3-phosphate + 5-amino-1-(5-phospho-beta-D-ribosyl)imidazole-4-carboxamide + L-glutamate + H(+). Its pathway is amino-acid biosynthesis; L-histidine biosynthesis; L-histidine from 5-phospho-alpha-D-ribose 1-diphosphate: step 5/9. In terms of biological role, IGPS catalyzes the conversion of PRFAR and glutamine to IGP, AICAR and glutamate. The HisF subunit catalyzes the cyclization activity that produces IGP and AICAR from PRFAR using the ammonia provided by the HisH subunit. The chain is Imidazole glycerol phosphate synthase subunit HisF from Thermosynechococcus vestitus (strain NIES-2133 / IAM M-273 / BP-1).